We begin with the raw amino-acid sequence, 429 residues long: Putative pentatricopeptide repeat-containing protein At1g03510 (429 aa).

10 PPR repeats span residues 11–45, 47–81, 82–112, 113–147, 148–180, 181–215, 216–246, 247–281, 282–312, and 318–348; these read KLIS…FALP, DAHV…NFLS, NPFV…IPQR, NAVV…PNES, SFNA…RFKP, NLIT…LIEP, HPQL…MEDR, DVVA…KVTP, DDIA…MQGD, and SKDH…MPEK. Residues 353–428 are type E motif; sequence TWGALLGACR…SPGSSWCLFK (76 aa).

The protein belongs to the PPR family. PCMP-E subfamily.

The protein is Putative pentatricopeptide repeat-containing protein At1g03510 (PCMP-E3) of Arabidopsis thaliana (Mouse-ear cress).